The primary structure comprises 470 residues: Dendritic cell-specific transmembrane protein (470 aa).

At 1 to 34 (MGIWTSGTDIFLSLWEIYVSPRSPGWMDFIQHLG) the chain is on the cytoplasmic side. A helical transmembrane segment spans residues 35–55 (VCCLVALISVGLLSVAACWFL). The Extracellular portion of the chain corresponds to 56–57 (PS). A helical membrane pass occupies residues 58–78 (IIAAAASWIITCVLLCCSKHA). The Cytoplasmic portion of the chain corresponds to 79 to 97 (RCFILLVFLSCGLREGRNA). A helical transmembrane segment spans residues 98–118 (LIAAGTGIVILGHVENIFHNF). Residues 119–209 (KGLLDGMTCN…MATTTEVLSS (91 aa)) are Extracellular-facing. A helical membrane pass occupies residues 210–230 (LGQKLLAFAGLSLVLLGTGLF). Over 231–292 (MKRFLGPCGW…FWPTPKERKN (62 aa)) the chain is Cytoplasmic. A helical transmembrane segment spans residues 293–313 (LGLFFLPILIHLCIWVLFAAV). The Extracellular portion of the chain corresponds to 314–376 (DYLLYRLIFS…PKPKFLLSET (63 aa)). The chain crosses the membrane as a helical span at residues 377 to 397 (WVPLSVILLILVMLGLLSSIL). The Cytoplasmic portion of the chain corresponds to 398-470 (MQLKILVSAS…QMDMASADKS (73 aa)).

Monomer. Homodimer. Isoform 1 interacts (via the C-terminus cytoplasmic tail) with OS9 isoform 1 (via the C-terminus tail); the interaction induces DCSTAMP redistribution to the endoplasmic reticulum-Golgi intermediate compartment. Isoform 1 interacts (via the C-terminus cytoplasmic tail) with OS9 isoform 2 (via the C-terminus tail). Interacts with CREB3. Post-translationally, glycosylated. In terms of tissue distribution, preferentially expressed by dendritic cells (DCs). Detected in both immature and mature DCs. Highly expressed in lymph nodes, lung, kidney and liver. Expressed at lower levels in pancreas, bone marrow, spleen, leukocytes, in freshly isolated peripheral blood mononuclear cells (PBMC) and B-cells. Not expressed in freshly isolated monocytes.

The protein localises to the cell membrane. It localises to the endoplasmic reticulum membrane. The protein resides in the endoplasmic reticulum-Golgi intermediate compartment membrane. It is found in the endosome. Probable cell surface receptor that plays several roles in cellular fusion, cell differentiation, bone and immune homeostasis. Plays a role in TNFSF11-mediated osteoclastogenesis. Cooperates with OCSTAMP in modulating cell-cell fusion in both osteoclasts and foreign body giant cells (FBGCs). Participates in osteoclast bone resorption. Involved in inducing the expression of tartrate-resistant acid phosphatase in osteoclast precursors. Plays a role in haematopoietic stem cell differentiation of bone marrow cells toward the myeloid lineage. Inhibits the development of neutrophilic granulocytes. Plays also a role in the regulation of dendritic cell (DC) antigen presentation activity by controlling phagocytic activity. Involved in the maintenance of immune self-tolerance and avoidance of autoimmune reactions. The polypeptide is Dendritic cell-specific transmembrane protein (DCSTAMP) (Homo sapiens (Human)).